The following is a 271-amino-acid chain: MKTTLLKTLTPELHLVQHNDIPVPSLKTCGWNTKNFPCKGHSLSVGXPQNAKQDVLWLSEVEPFKNGNAIRGGVPICYPWFGGVKQPAHGTARIRLWQLSHYYISVHKVRLEFELFSDLNIIEAKVSMVFTDKCHLTFTHYGEESAQAALHTYFNIGDINQVEVQGLPETCFNSLNQQQENVPSPRHISENVDCIYSAENMQNQILDKSFNRTIALHHHNASQFVLWNPWHKKTSGMSETGYQKMLCLETARIHHLLEFGESLSVEISLKG.

The substrate site is built by Arg-71 and Arg-93. His-151 is an active-site residue. Substrate is bound at residue Asp-193. The active site involves Glu-249.

Belongs to the glucose-6-phosphate 1-epimerase family.

It catalyses the reaction alpha-D-glucose 6-phosphate = beta-D-glucose 6-phosphate. This Haemophilus influenzae (strain ATCC 51907 / DSM 11121 / KW20 / Rd) protein is Putative glucose-6-phosphate 1-epimerase.